A 474-amino-acid polypeptide reads, in one-letter code: Glycogen synthase (474 aa).

Lysine 15 contributes to the ADP-alpha-D-glucose binding site.

The protein belongs to the glycosyltransferase 1 family. Bacterial/plant glycogen synthase subfamily.

It carries out the reaction [(1-&gt;4)-alpha-D-glucosyl](n) + ADP-alpha-D-glucose = [(1-&gt;4)-alpha-D-glucosyl](n+1) + ADP + H(+). It participates in glycan biosynthesis; glycogen biosynthesis. Synthesizes alpha-1,4-glucan chains using ADP-glucose. The protein is Glycogen synthase of Chlamydia muridarum (strain MoPn / Nigg).